Here is a 117-residue protein sequence, read N- to C-terminus: Nuclear transition protein 2 (117 aa).

A disordered region spans residues 1 to 117; the sequence is MDTKMQSLPT…KRRSSGRRYK (117 aa). The span at 7–26 shows a compositional bias: low complexity; that stretch reads SLPTTHPHPHSSSRPQSHTS. Residues His12, His14, His16, His24, Cys32, Cys34, Cys38, and Cys41 each coordinate Zn(2+). The segment covering 44–53 has biased composition (low complexity); it reads AGHAGSSSSP. 2 stretches are compositionally biased toward basic residues: residues 60 to 77 and 93 to 117; these read KHPKPSVHSRHSPARPSH and SKRKAVRRRKRTHRAKRRSSGRRYK. Residues 90 to 98 carry the Nuclear localization signal motif; that stretch reads GKVSKRKAV. Residue Ser112 is modified to Phosphoserine.

The protein belongs to the nuclear transition protein 2 family.

The protein localises to the nucleus. Its subcellular location is the chromosome. Functionally, plays a key role in the replacement of histones to protamine in the elongating spermatids of mammals. In condensing spermatids, loaded onto the nucleosomes, where it promotes the recruitment and processing of protamines, which are responsible for histone eviction. The histone H2AB1-H2BC1/TH2B dimer is required for loading of TNP2 onto chromatin. The polypeptide is Nuclear transition protein 2 (Mus musculus (Mouse)).